We begin with the raw amino-acid sequence, 381 residues long: Chymosin (381 aa).

The first 16 residues, 1 to 16, serve as a signal peptide directing secretion; that stretch reads MRGFVVLLAVFALSQA. A propeptide spans 17–58 (activation peptide); it reads SGIVRIPLHKGKSLRRALKERGLLEDFLKNHQHAVSRKHSNS. The region spanning 74 to 378 is the Peptidase A1 domain; sequence YFGKIYIGTP…DRASNLVGLA (305 aa). Asp92 is a catalytic residue. Repeat unit 1 spans residues 92 to 102; that stretch reads DTGSSDLWVPS. Intrachain disulfides connect Cys105–Cys110 and Cys265–Cys269. Asp274 is a catalytic residue. Copy 2 of the repeat occupies 274 to 284; sequence DTGTSMLVGPG. Cysteines 308 and 341 form a disulfide.

It belongs to the peptidase A1 family. Monomer.

The catalysed reaction is Broad specificity similar to that of pepsin A. Clots milk by cleavage of a single 104-Ser-Phe-|-Met-Ala-107 bond in kappa-chain of casein.. Its activity is regulated as follows. Inhibited by pepstatin. Functionally, hydrolyzes a variety of proteins. The protein is Chymosin (CYM) of Callithrix jacchus (White-tufted-ear marmoset).